The primary structure comprises 1014 residues: MTATITNLPSLYDPFTTEAKWQKFWEENQIYKADPNKGGEPYCVVIPPPNVTGSLHMGHAFESALIDTLVRYHRMQGRNTLWLPGTDHASIAVHTILEKQLKAEGKTRQELGREKFLERSWQWKAESGGTIVNQLRRLGVSVDWSRERFTLDEGLSKAVAEAFVSLYDEGLIYRGEYLVNWCPATQSAVSDVEVESKEVEGNLWHFRYPLTDGSGYVEVATTRPETMLGDTAVAVNPNDDRYKHLIGKTLTLPITQQEIPIISDELVDPAFGTGCVKVTPAHDLNDFEMGKRHNLPFINILNKDGTLNANGGEFAGQDRFVARKNVVSRLETDGFLVKIEDYKHTVPYSDRGKVPVEPLLSTQWFVKIRPLADKSLAFLDEKNSPEFVPQRWTKVYRDWLVNLRDWCISRQLWWGHQIPAWYAVSETNGQITDNTPFVVAKSTNEAWEKAKSQFGENVQLEQDPDVLDTWFSSGLWPFSTLGWPEQTPDLAKYYPTTTLVTGFDIIFFWVARMTMMAGHFTGQMPFQTVYIHGLVRDENNKKMSKSANNGIDPLLLIDKYGTDALRYTLVREVAGAGQDIRLEYDRKKDESPSVEASRNFANKLWNAARFVMMNLDGLSTGDLGLGTGNSQSLELSDGVPPSLADRWIISRYHQVIKQTTHYIDNYGLGEAAKGIYEFIWGDFCDWYIELVKSRLQKDADPLSRKAAQQTLAYVLEGILKLLHPFMPHITEEIWQTLTQQPEDSPQTLALQAYPQADVNLINPALETQFDLLIGTIRTIRNLRAEAEVKPGAKIIANLQTDSESERQILMAGQSYIKDLAKVETLTIAAGQQPSTVTKKKPQKGLKTIGLVIAGLVFLRVALAVADTVDNVPFLGTFFEIVGLGYSAWFVTRNLLSTPARKRFLAKFFAPPTEKNLSGTVQQAPEAAEKSIAGVVGTVQVVIPLAGVVDIETLRAKLERSISKAETEAQSLKGRLSNPKFVDKAPADVVQAARDALAEAEKQVEILRLRLQTLV.

Positions 49 to 59 (PNVTGSLHMGH) match the 'HIGH' region motif. The 'KMSKS' region signature appears at 542–546 (KMSKS). Lys-545 serves as a coordination point for ATP. Residues 947–1014 (VVDIETLRAK…ILRLRLQTLV (68 aa)) are a coiled coil.

This sequence belongs to the class-I aminoacyl-tRNA synthetase family. ValS type 1 subfamily. As to quaternary structure, monomer.

Its subcellular location is the cytoplasm. The catalysed reaction is tRNA(Val) + L-valine + ATP = L-valyl-tRNA(Val) + AMP + diphosphate. Functionally, catalyzes the attachment of valine to tRNA(Val). As ValRS can inadvertently accommodate and process structurally similar amino acids such as threonine, to avoid such errors, it has a 'posttransfer' editing activity that hydrolyzes mischarged Thr-tRNA(Val) in a tRNA-dependent manner. The polypeptide is Valine--tRNA ligase (Nostoc sp. (strain PCC 7120 / SAG 25.82 / UTEX 2576)).